The primary structure comprises 523 residues: 2-isopropylmalate synthase (523 aa).

The Pyruvate carboxyltransferase domain maps to 5–267 (VIIFDTTLRD…ETGINAKEIH (263 aa)). 4 residues coordinate Mn(2+): D14, H202, H204, and N238. Residues 392 to 523 (KLAQLVVHSD…QKDRSELGGV (132 aa)) are regulatory domain.

It belongs to the alpha-IPM synthase/homocitrate synthase family. LeuA type 1 subfamily. In terms of assembly, homodimer. Requires Mn(2+) as cofactor.

It localises to the cytoplasm. It catalyses the reaction 3-methyl-2-oxobutanoate + acetyl-CoA + H2O = (2S)-2-isopropylmalate + CoA + H(+). It participates in amino-acid biosynthesis; L-leucine biosynthesis; L-leucine from 3-methyl-2-oxobutanoate: step 1/4. Its function is as follows. Catalyzes the condensation of the acetyl group of acetyl-CoA with 3-methyl-2-oxobutanoate (2-ketoisovalerate) to form 3-carboxy-3-hydroxy-4-methylpentanoate (2-isopropylmalate). In Shewanella sediminis (strain HAW-EB3), this protein is 2-isopropylmalate synthase.